The primary structure comprises 245 residues: Photosystem II protein PSBS2 (245 aa).

The N-terminal 25 residues, methionine 1–tyrosine 25, are a transit peptide targeting the chloroplast. The next 4 helical transmembrane spans lie at leucine 72–threonine 92, glycine 108–leucine 128, leucine 185–phenylalanine 205, and glutamate 217–glycine 237.

The protein belongs to the ELIP/psbS family.

It is found in the plastid. The protein resides in the chloroplast thylakoid membrane. In terms of biological role, required for non-photochemical quenching (NPQ), a mechanism that converts and dissipates the harmful excess absorbed light energy into heat and protect the photosynthetic apparatus from photo-oxidative damage. Seems involved in the activation of NPQ, possibly by promoting conformational changes required for activation of LHCSR3-dependent quenching in the antenna of photosystem II (PSII). This is Photosystem II protein PSBS2 from Chlamydomonas reinhardtii (Chlamydomonas smithii).